Consider the following 504-residue polypeptide: MVSLLSFFLLLLVPIFFLLIFTKKIKESKQNLPPGPAKLPIIGNLHQLQGLLHKCLHDLSKKHGPVMHLRLGFAPMVVISSSEAAEEALKTHDLECCSRPITMASRVFSRNGKDIGFGVYGDEWRELRKLSVREFFSVKKVQSFKYIREEENDLMIKKLKELASKQSPVDLSKILFGLTASIIFRTAFGQSFFDNKHVDQESIKELMFESLSNMTFRFSDFFPTAGLKWFIGFVSGQHKRLYNVFNRVDTFFNHIVDDHHSKKATQDRPDMVDAILDMIDNEQQYASFKLTVDHLKGVLSNIYHAGIDTSAITLIWAMAELVRNPRVMKKAQDEIRTCIGIKQEGRIMEEDLDKLQYLKLVVKETLRLHPAAPLLLPRETMADIKIQGYDIPQKRALLVNAWSIGRDPESWKNPEEFNPERFIDCPVDYKGHSFELLPFGSGRRICPGIAMAIATIELGLLNLLYFFDWNMPEKKKDMDMEEAGDLTVDKKVPLELLPVIRISL.

Residues M1 to F21 traverse the membrane as a helical segment. Residue C446 participates in heme binding.

This sequence belongs to the cytochrome P450 family. The cofactor is heme.

It is found in the membrane. The protein is Cytochrome P450 71B4 (CYP71B4) of Arabidopsis thaliana (Mouse-ear cress).